Here is a 230-residue protein sequence, read N- to C-terminus: Cutinase (230 aa).

Residues 1–16 (MKFFALTTFLAATASA) form the signal peptide. Cys-47 and Cys-125 are oxidised to a cystine. Ser-136 (nucleophile) is an active-site residue. Cys-187 and Cys-194 are oxidised to a cystine. The active site involves Asp-191. The Proton donor/acceptor role is filled by His-204.

Belongs to the cutinase family. Post-translationally, the 2 disulfide bonds play a critical role in holding the catalytic residues in juxta-position; reduction of the disulfide bridges results in the complete inactivation of the enzyme.

It is found in the secreted. The catalysed reaction is cutin + H2O = cutin monomers.. Functionally, catalyzes the hydrolysis of complex carboxylic polyesters found in the cell wall of plants. Degrades cutin, a macromolecule that forms the structure of the plant cuticle. Allows pathogenic fungi to penetrate through the cuticular barrier into the host plant during the initial stage of fungal infection. The chain is Cutinase (CUTA) from Fusarium solani subsp. cucurbitae (Neocosmosporum cucurbitae).